We begin with the raw amino-acid sequence, 445 residues long: Histamine H3 receptor (445 aa).

Residues Met-1–Ala-39 lie on the Extracellular side of the membrane. Residue Asn-11 is glycosylated (N-linked (GlcNAc...) asparagine). A helical membrane pass occupies residues Leu-40 to Val-60. At Ala-61 to Asn-70 the chain is on the cytoplasmic side. Residues Phe-71–Tyr-91 form a helical membrane-spanning segment. Residues Val-92–Lys-108 lie on the Extracellular side of the membrane. Cys-107 and Cys-188 are disulfide-bonded. A helical membrane pass occupies residues Leu-109 to Ser-129. Residues Tyr-130 to Met-156 lie on the Cytoplasmic side of the membrane. Residues Ala-157–Leu-177 traverse the membrane as a helical segment. At Ser-178–Trp-196 the chain is on the extracellular side. The helical transmembrane segment at Tyr-197 to Phe-217 threads the bilayer. Over Asn-218–Ser-359 the chain is Cytoplasmic. Disordered regions lie at residues Asp-234 to Trp-259 and Ala-286 to Arg-336. Over residues Pro-241–Pro-256 the composition is skewed to pro residues. Positions Ala-290–Ala-299 are enriched in gly residues. The segment covering Ala-300–Arg-312 has biased composition (low complexity). Residues Leu-360 to Ile-380 traverse the membrane as a helical segment. Residues Arg-381–Thr-396 are Extracellular-facing. The helical transmembrane segment at Ser-397–Tyr-417 threads the bilayer. The Cytoplasmic segment spans residues Ser-418 to Lys-445. Ser-439 is modified (phosphoserine).

This sequence belongs to the G-protein coupled receptor 1 family. As to expression, expressed abundantly in brain, most notably throughout the thalamus, the ventromedial hypothalamus and the caudate nucleus. Isoform 1 is largely predominant in all tissues.

The protein resides in the cell membrane. The H3 subclass of histamine receptors could mediate the histamine signals in CNS and peripheral nervous system. Signals through the inhibition of adenylate cyclase and displays high constitutive activity (spontaneous activity in the absence of agonist). In Rattus norvegicus (Rat), this protein is Histamine H3 receptor (Hrh3).